Here is a 76-residue protein sequence, read N- to C-terminus: Large ribosomal subunit protein eL29 (76 aa).

Over residues 1–29 the composition is skewed to basic residues; that stretch reads MAKSKNHTNHNQNKKAHRNGIKRPLRKRH. Disordered regions lie at residues 1-33 and 47-76; these read MAKS…ESTL and RKGN…PVTL. Ser31 carries the post-translational modification Phosphoserine. Positions 51–62 are enriched in basic and acidic residues; sequence LSREESVKRYNE.

The protein belongs to the eukaryotic ribosomal protein eL29 family.

This chain is Large ribosomal subunit protein eL29 (RpL29), found in Drosophila melanogaster (Fruit fly).